We begin with the raw amino-acid sequence, 144 residues long: Putative low molecular weight protein-tyrosine-phosphatase (144 aa).

C9 (nucleophile) is an active-site residue. The active site involves R15. D115 (proton donor) is an active-site residue.

It belongs to the low molecular weight phosphotyrosine protein phosphatase family.

It catalyses the reaction O-phospho-L-tyrosyl-[protein] + H2O = L-tyrosyl-[protein] + phosphate. This chain is Putative low molecular weight protein-tyrosine-phosphatase, found in Klebsiella pneumoniae.